The sequence spans 412 residues: Probable inactive allantoicase (412 aa).

It belongs to the allantoicase family.

Its function is as follows. The function of this enzyme is unclear as allantoicase activity is not known to exist in mammals. The chain is Probable inactive allantoicase (ALLC) from Bos taurus (Bovine).